The chain runs to 230 residues: Ribosomal RNA large subunit methyltransferase E (230 aa).

A compositionally biased stretch (gly residues) spans 1–13; that stretch reads MSGSGGKGGGRGG. A disordered region spans residues 1–22; that stretch reads MSGSGGKGGGRGGLHVRVKTAK. Gly81, Trp83, Asp100, Asp116, and Asp140 together coordinate S-adenosyl-L-methionine. Lys180 serves as the catalytic Proton acceptor.

This sequence belongs to the class I-like SAM-binding methyltransferase superfamily. RNA methyltransferase RlmE family.

It localises to the cytoplasm. The enzyme catalyses uridine(2552) in 23S rRNA + S-adenosyl-L-methionine = 2'-O-methyluridine(2552) in 23S rRNA + S-adenosyl-L-homocysteine + H(+). In terms of biological role, specifically methylates the uridine in position 2552 of 23S rRNA at the 2'-O position of the ribose in the fully assembled 50S ribosomal subunit. This chain is Ribosomal RNA large subunit methyltransferase E, found in Sphingopyxis alaskensis (strain DSM 13593 / LMG 18877 / RB2256) (Sphingomonas alaskensis).